An 885-amino-acid polypeptide reads, in one-letter code: DNA mismatch repair protein MutS (885 aa).

A disordered region spans residues 1-67 (MAPGEQQLSL…SNNDDEGLPR (67 aa)). A compositionally biased stretch (basic and acidic residues) spans 26 to 36 (SEDKTEESERP). ATP is bound at residue 691 to 698 (GPNASGKS).

It belongs to the DNA mismatch repair MutS family.

In terms of biological role, this protein is involved in the repair of mismatches in DNA. It is possible that it carries out the mismatch recognition step. This protein has a weak ATPase activity. This chain is DNA mismatch repair protein MutS, found in Synechococcus sp. (strain RCC307).